A 54-amino-acid chain; its full sequence is Large ribosomal subunit protein bL33B (54 aa).

The protein belongs to the bacterial ribosomal protein bL33 family.

This chain is Large ribosomal subunit protein bL33B, found in Mycolicibacterium vanbaalenii (strain DSM 7251 / JCM 13017 / BCRC 16820 / KCTC 9966 / NRRL B-24157 / PYR-1) (Mycobacterium vanbaalenii).